The sequence spans 2534 residues: MSPASRSRVEIADSESDSERLSSSPWSILSDNDSNTSDERSTRAGPGSLEPIAVIGIGCRLSGSATDVSGLWDMLKSGRSGWTPGPGTRFNMKAFQDPTGTRSGTTNATGGHFIREDISKFDATFFGINPVEAQAMDPQQRLMLEVAYEAFENAGITMDALWGSNTGVYVGQWASDYHEIATRDIERPPLYLVTGTGPAITSNRVSYVFNLRGPSFTVDTGCSSSLVALHQAVLSLRNRETTQCFVGGVNLLLDPQRFHYQSRLKMFSKDGRSFPFDARANGYGRGEGVTGVVLKPLSVALRDGDPVRAVIRNSVLNQDGRTPGISVPSAVAQKEAIIRAYRQAKLDLYADYVEAHGTGTKVGDPIETSAIAAALTQRRSPSRPLPIGSIKGNIGHTESAAGLAGLIKSVLMLENGMIPPQVNYETTNPDIHLEEWNLRIPTKLERQTLRRISLNSFGYGGTNAHVIIDAAHEAISAFGRLSLSRHLQLSYHSEKPRVFMVSGASEKACQRVCARLARYLVVNHRNSINPDALLARLAHTLAKQSIHAYRVIFVASELDELIKQLITASHSTITRREKFGQHRIALIFSGQGAQYAEMGRDLLKSYPSFVRSLERARQQLSRLGCTWDLLSELCRPKADSRVNEPAFSQPMCTAIQLALVDLLNEFGVSPSAVLGHSSGEIGAAYAAGALSFRDAISVSYYRGKLASELLAENQSPGAMIAVGAPPDIAEQHINKLGTDVGRMRIACFNSPSSVTVSGDVAAIDRIKEVLDTEGLFNRKLITHGAAYHSHQMKLIEDKYIAALKGLKAKPVSSSIRMFSSVTSKELDESTVLDGGYWAQNLVSPVLFSQALRTMCEQDYNGLPIDTLIEVGPHSQLSGPVNQILKTIPGPHGQASYTNTLKRGDDAETALLRCLGFLAIKNGSVRLCDLNKDSKDSDIQPLADLPPYSFDHDRSFWHETRLSRDYRHREHLPHELLGTLSADVNKLEPRWRRFVSLKETPWLRNHIIQGLITFPAAGYITMAIQAIRQHMHTANPASTIQFIRLRDVSFGKGLVLPDENAEVEISLSLRPQARTARESSGIWNEFRIFTVTPDQKWTEHCRGLVQAEVDSVEGFRSIFTPADISRIDSECTHGTIPQKFYAVGKRNGLDWQHPFNNLHQIRSSKHSCVATARVPEYEMPSGGMEDLLHPAVLDSALFHGLSTVIYLEDGRSSAYVPTFIKQLWVANRHVAPGSYLTCSTIRRNEPLVFDLHTKDEINQMAVVAQGIRVTSLGGDVAAGVSKREACHTQTLVPYVDAWTTEHRDQVCRATIELGSLMETNRALDAITIHFAQNAIREISLNDIQETHLQRYFQWMGTLADETYDNILLENKPEDLGVIGEAIAILGPHLVDILKGKTSALSLLTKNNLLSRVYTEWCSSRLYPQMSAYCHELGRFNPQLKVLEIGAGTGSATLPILKALNDCSGRFIQRYDFTDISPGFFEPAKERLGDLANVVEFRVLDAGRNAQEQGFEEGAYDLIVACNVIHATPRIDETLRNIRPLLKPGGKFMLMEISRYTLYFNIVFGLFEGWWLGYDEGRTRSPLLTDSEWCQRLEKAGFAHIEKAFVDYPHENGGSLSVFISTAPFPRRNESLPIHLLTDSNASNATEEQAQEIQQACQTSVALLPITHPCQHGGVAILLPEIAKLLCAEPDVNVWNSFKNWILKSRAVLLVSNCTMADSSHAETGLWAGFARTMRLEYPNLRQVVLDIQTPNVPVMSKLKEVLPIILNSSSFDLDCLSSEVENEFTEKDGQLFVSRYAYRPDISRDVDLTSRQAASEPVPFVSTGRILTAELGVPGLLETIRWKDDIECPPLGPDDVRFELRGASINFKDVLIAAGQLEGITEMRNDCSGVVVEVGENMKHRFKPGDRVCALYSRSYTNYPLVHGDCCQVIPDSLSFAEGASLPIVWATVYYGLVDKGSLSKGEKILIHSAAGAVGQAAIMLAQHLGAEVFATVGSEAKRDLLHAKYGVPYDHIFSSRTTAFYGEIMKSTGGYGVDVVLNSLSGEMFRESCNLMASFGRFVEIGRKDLMDDALMPMEFLLRNITFSYVDLTAIIEQRKPLARRLLHDIADLAASGSIRPVTLTTMPISDIEIAFRQIQAGKHTGKIVLTVEENQEVPAVPSMPKQARLHEDASYIVVGGLGGLGRWLTTWLADHGAKHIVALSRSGAKDADSRTFISNIRGRGVNLIAPPCDVVCADAVVALAQELKRSELPPVRGVINSAMVLRDTLFDNMTEDDWRTALASKVRGSQNLHTTFKSLDFFVMMSSIVAVRGNYGQSNYSAACSFQDTFVRHMVQQGEPAFSINIGPIRDVGYVSENPEVAEALRRNGLGSIGVSDVLIVLNHAILNARGANPSTCVASIGLIASDDESENGRDFLMTDRRFSQLVKHNGSKQKSAGEALDAITLLSAATQLDEAVHIVTNAILNQLSKLIVTPVEMLSPAQSLDSYGVDSLVAVELRNWIGAYLHANVQLMVIRGTGSISQLAAIVAKESRVVKL.

The interval 1–49 (MSPASRSRVEIADSESDSERLSSSPWSILSDNDSNTSDERSTRAGPGSL) is disordered. The region spanning 49 to 470 (LEPIAVIGIG…GTNAHVIIDA (422 aa)) is the Ketosynthase family 3 (KS3) domain. Catalysis depends on for beta-ketoacyl synthase activity residues Cys222, His356, and His396. Positions 587 to 885 (IFSGQGAQYA…LSGPVNQILK (299 aa)) are malonyl-CoA:ACP transacylase (MAT) domain. Positions 973–1111 (HELLGTLSAD…GLVQAEVDSV (139 aa)) are N-terminal hotdog fold. A dehydratase (DH) domain region spans residues 973-1273 (HELLGTLSAD…QGIRVTSLGG (301 aa)). A PKS/mFAS DH domain is found at 973 to 1277 (HELLGTLSAD…VTSLGGDVAA (305 aa)). The active-site Proton acceptor; for dehydratase activity is His1005. Residues 1131–1277 (THGTIPQKFY…VTSLGGDVAA (147 aa)) are C-terminal hotdog fold. Residue Asp1193 is the Proton donor; for dehydratase activity of the active site. Residues 1395–1625 (KTSALSLLTK…VFISTAPFPR (231 aa)) form a methyltransferase (CMet) domain region. The segment at 1834–2146 (GLLETIRWKD…AGKHTGKIVL (313 aa)) is enoyl reductase (ER) domain. Residues 2452–2529 (EAVHIVTNAI…QLAAIVAKES (78 aa)) enclose the Carrier domain. The ketoreductase (KR) domain stretch occupies residues 2453 to 2526 (AVHIVTNAIL…SISQLAAIVA (74 aa)). Ser2489 is subject to O-(pantetheine 4'-phosphoryl)serine.

The protein operates within antibiotic biosynthesis. In terms of biological role, polyketide synthase; part of the gene cluster that mediates the biosynthesis of emericellamides, secondary metabolites acting as antibiotics. The biosynthesis of emericellamides initiates from the highly reducing polyketide synthase easB which catalyzes the formation of the linear polyketide chain. EasB produces several polyketides that can be further processed by the downstream enzymes. The polyketides are released from easB as linear polyketide carboxylic acids, which are converted to CoA thioesters by the acyl-CoA ligase easD. The substrates are then loaded onto the acyltransferase easC, which shuttles them to the first thiolation (T) domain of the nonribosomal peptide synthetase easA. EasA then performs condensation of the polyketides with one glycine, two alanine, one valine and one leucine residues. A last step of cyclization leads to the production of emericellamides. This is Highly reducing polyketide synthase easB from Emericella nidulans (strain FGSC A4 / ATCC 38163 / CBS 112.46 / NRRL 194 / M139) (Aspergillus nidulans).